The following is a 484-amino-acid chain: Chromosomal replication initiator protein DnaA (484 aa).

Residues 1-83 are domain I, interacts with DnaA modulators; sequence MQPPSQDWAS…LAWRTVWPGI (83 aa). Residues 83-146 are domain II; sequence IAEVKVSVRN…EKKAEGEDQN (64 aa). Residues 110 to 146 are disordered; that stretch reads GDQPRPLPKKPAKKKQSVPATPKSTSPEKKAEGEDQN. Basic residues predominate over residues 116-125; the sequence is LPKKPAKKKQ. Residues 135-146 are compositionally biased toward basic and acidic residues; the sequence is SPEKKAEGEDQN. Residues 147 to 364 form a domain III, AAA+ region region; sequence QFEERYNFDN…GALNRVVAYA (218 aa). The ATP site is built by G191, G193, K194, and T195. The interval 365–484 is domain IV, binds dsDNA; it reads TLSNRPINMD…VRLLMRQFEG (120 aa).

This sequence belongs to the DnaA family. Oligomerizes as a right-handed, spiral filament on DNA at oriC.

Its subcellular location is the cytoplasm. In terms of biological role, plays an essential role in the initiation and regulation of chromosomal replication. ATP-DnaA binds to the origin of replication (oriC) to initiate formation of the DNA replication initiation complex once per cell cycle. Binds the DnaA box (a 9 base pair repeat at the origin) and separates the double-stranded (ds)DNA. Forms a right-handed helical filament on oriC DNA; dsDNA binds to the exterior of the filament while single-stranded (ss)DNA is stabiized in the filament's interior. The ATP-DnaA-oriC complex binds and stabilizes one strand of the AT-rich DNA unwinding element (DUE), permitting loading of DNA polymerase. After initiation quickly degrades to an ADP-DnaA complex that is not apt for DNA replication. Binds acidic phospholipids. This chain is Chromosomal replication initiator protein DnaA, found in Zymomonas mobilis subsp. mobilis (strain ATCC 31821 / ZM4 / CP4).